Reading from the N-terminus, the 368-residue chain is MTTLNSTPRADGFHMPAEWAPQTQVWMVWPERPDNWRLGGKPAQAAHVAIAKAIARFEPVTVAVSAAQYDNARARLDMPNIRVVEMSSNDAWVRDSGPTFVINDRGELRGVNWEFNAWGGFDGGLYAPWNLDSQVGSKVLEIERCPRYATQGFVLEGGSIHVDGEGTLITTEECLLNRNRNPHLTREQIEAVLSDYLAVDKIIWLPDGLFNDETDGHVDNFCCYIRPGEVLLAWTDDPEDPNYPRCHAALSILENTRDAQGRAFIVHKMPIPGPLFATEEECAGVDQVHGSQERNPSVRLAGSYVNFLIVNGGIIAPSFDDPMDEKAREILQKLFPEHEVVMAPGRELLLGGGNIHCLTQQQPAPFKA.

The Amidino-cysteine intermediate role is filled by Cys-357.

It belongs to the agmatine deiminase family. Homodimer.

It catalyses the reaction agmatine + H2O = N-carbamoylputrescine + NH4(+). It functions in the pathway amine and polyamine biosynthesis; putrescine biosynthesis via agmatine pathway; N-carbamoylputrescine from agmatine: step 1/1. Functionally, mediates the hydrolysis of agmatine into N-carbamoylputrescine in the arginine decarboxylase (ADC) pathway of putrescine biosynthesis, a basic polyamine. The polypeptide is Agmatine deiminase (Pseudomonas syringae pv. tomato (strain ATCC BAA-871 / DC3000)).